Here is a 784-residue protein sequence, read N- to C-terminus: Toll-like receptor 2 (784 aa).

The signal sequence occupies residues 1-18 (MPHTLWMVWVLGVIISLS). Over 19 to 587 (KEESSNQASL…VRLSVSECHR (569 aa)) the chain is Extracellular. Residues Cys30 and Cys36 are joined by a disulfide bond. LRR repeat units lie at residues 54 to 77 (VKSL…RYVN), 78 to 101 (LQAL…SLGR), 102 to 125 (LEHL…PLSS), 126 to 150 (LKFL…HLTK), 151 to 175 (LRIL…GLTF), 176 to 199 (LEEL…SIQN), 200 to 223 (VSHL…LTSS), 224 to 250 (VECL…TNSL), 251 to 278 (IKKF…QISG), 279 to 308 (LLEL…DPGK), 309 to 337 (VETV…LTER), 338 to 361 (VKRI…HLKS), 362 to 388 (LEYL…AWPS), 389 to 414 (LQTL…TLKN), 415 to 437 (LTNL…WPEK), 438 to 457 (MKYL…CIPK), 458 to 478 (TLEI…NLPQ), 479 to 500 (LKEL…LLPM), and 501 to 524 (LLVL…SFHT). N-linked (GlcNAc...) asparagine glycosylation is present at Asn114. N-linked (GlcNAc...) asparagine glycosylation occurs at Asn199. A disulfide bridge links Cys353 with Cys382. N-linked (GlcNAc...) asparagine glycosylation occurs at Asn414. A disulfide bond links Cys432 and Cys454. An N-linked (GlcNAc...) asparagine glycan is attached at Asn442. Positions 525 to 579 (LKTLEAGGNNFICSCEFLSFTQEQQALAKVLVDWPANYLCDSPSHVRGQRVQDVR) constitute an LRRCT domain. A helical transmembrane segment spans residues 588-608 (AALVSGMCCALFLLILLMGVL). Over 609 to 784 (CHRFHGLWYM…WVNLRAAIKS (176 aa)) the chain is Cytoplasmic. Positions 639-782 (ICYDAFVSYS…GFWVNLRAAI (144 aa)) constitute a TIR domain. A Glycyl lysine isopeptide (Lys-Gly) (interchain with G-Cter in ubiquitin) cross-link involves residue Lys754. An ATG16L1-binding motif motif is present at residues 761-778 (YLEWPMDEARQEGFWVNL).

This sequence belongs to the Toll-like receptor family. In terms of assembly, interacts with LY96, TLR1 and TLR6 (via extracellular domain). TLR2 seems to exist in heterodimers with either TLR1 or TLR6 before stimulation by the ligand. The heterodimers form bigger oligomers in response to their corresponding ligands as well as further heterotypic associations with other receptors such as CD14 and/or CD36. Binds MYD88 (via TIR domain). Interacts with TICAM1. Interacts with CNPY3. Interacts with ATG16L1. Interacts with PPP1R11. Interacts with TICAM2. Interacts with TIRAP. Post-translationally, ubiquitinated at Lys-754 by PPP1R11, leading to its degradation. Deubiquitinated by USP2. Glycosylation of Asn-442 is critical for secretion of the N-terminal ectodomain of TLR2.

The protein localises to the membrane. It localises to the cytoplasmic vesicle. The protein resides in the phagosome membrane. It is found in the membrane raft. Its function is as follows. Cooperates with LY96 to mediate the innate immune response to bacterial lipoproteins and other microbial cell wall components. Cooperates with TLR1 or TLR6 to mediate the innate immune response to bacterial lipoproteins or lipopeptides. Acts via MYD88 and TRAF6, leading to NF-kappa-B activation, cytokine secretion and the inflammatory response. May also promote apoptosis in response to lipoproteins. Forms activation clusters composed of several receptors depending on the ligand, these clusters trigger signaling from the cell surface and subsequently are targeted to the Golgi in a lipid-raft dependent pathway. Forms the cluster TLR2:TLR6:CD14:CD36 in response to diacylated lipopeptides and TLR2:TLR1:CD14 in response to triacylated lipopeptides. In Macaca fascicularis (Crab-eating macaque), this protein is Toll-like receptor 2 (TLR2).